Consider the following 956-residue polypeptide: Nitrogen regulatory protein NUT1 (956 aa).

Residues 1–12 show a composition bias toward basic and acidic residues; sequence MNPTITEHDFRF. Disordered stretches follow at residues 1 to 51, 120 to 222, 240 to 262, 348 to 373, and 524 to 661; these read MNPT…NDAQ, QQEE…PAAA, KTSI…FQVP, GQSI…SQVS, and TLPG…DAPT. Residues 15–37 show a composition bias toward low complexity; the sequence is RPAAPGRDPGSDSSDDPLPASLR. 4 stretches are compositionally biased toward polar residues: residues 42–51, 131–153, 167–194, and 208–217; these read DRQSAFNDAQ, PLKT…QKKS, SHGS…NAIS, and AAQSQFNPQS. Residues 588-613 are compositionally biased toward polar residues; that stretch reads NASTTAIPNSQMQYEQQGVQGHTNSP. Low complexity-rich tracts occupy residues 623-633 and 640-661; these read SGFSSVVHSRP and SKNG…DAPT. The GATA-type zinc-finger motif lies at 663-687; the sequence is CTNCATQTTPLWRRNPEGQPLCNAC. Positions 708–890 are disordered; the sequence is KKRNRGSGSN…AATRPSGFGT (183 aa). Residues 713-760 are compositionally biased toward polar residues; sequence GSGSNVPGATSGSRSKKGATSTAVSGTNTRKNSSLAISRTASTTNVQV. Positions 812 to 839 are enriched in low complexity; sequence VVPIAAAPPKNMPGPGAAAAARTVALGP. Polar residues-rich tracts occupy residues 849–863 and 872–881; these read SPAN…NANH and PENSTGSNEA.

The protein resides in the nucleus. Its function is as follows. Major nitrogen regulatory protein; activates expression of nitrogen-regulated genes. The chain is Nitrogen regulatory protein NUT1 (NUT1) from Pyricularia oryzae (strain 70-15 / ATCC MYA-4617 / FGSC 8958) (Rice blast fungus).